We begin with the raw amino-acid sequence, 172 residues long: Putative phosphoesterase BAMEG_3349 (172 aa).

Catalysis depends on H34, which acts as the Proton donor. 2 consecutive short sequence motifs (HXTX) follow at residues H34 to L37 and H115 to I118. Residue H115 is the Proton acceptor of the active site.

The protein belongs to the 2H phosphoesterase superfamily. YjcG family.

The polypeptide is Putative phosphoesterase BAMEG_3349 (Bacillus anthracis (strain CDC 684 / NRRL 3495)).